The following is a 118-amino-acid chain: Large ribosomal subunit protein uL24 (118 aa).

It belongs to the universal ribosomal protein uL24 family. As to quaternary structure, part of the 50S ribosomal subunit.

Its function is as follows. One of two assembly initiator proteins, it binds directly to the 5'-end of the 23S rRNA, where it nucleates assembly of the 50S subunit. Functionally, one of the proteins that surrounds the polypeptide exit tunnel on the outside of the subunit. The chain is Large ribosomal subunit protein uL24 from Prochlorococcus marinus (strain MIT 9515).